The following is a 260-amino-acid chain: Methyl-coenzyme M reductase I subunit gamma (260 aa).

Arg-123 is a coenzyme M binding site.

Belongs to the methyl-coenzyme M reductase gamma subunit family. As to quaternary structure, MCR is a hexamer of two alpha, two beta, and two gamma chains, forming a dimer of heterotrimers. Requires coenzyme F430 as cofactor.

Its subcellular location is the cytoplasm. It catalyses the reaction coenzyme B + methyl-coenzyme M = methane + coenzyme M-coenzyme B heterodisulfide. It participates in one-carbon metabolism; methyl-coenzyme M reduction; methane from methyl-coenzyme M: step 1/1. Component of the methyl-coenzyme M reductase (MCR) I that catalyzes the reductive cleavage of methyl-coenzyme M (CoM-S-CH3 or 2-(methylthio)ethanesulfonate) using coenzyme B (CoB or 7-mercaptoheptanoylthreonine phosphate) as reductant which results in the production of methane and the mixed heterodisulfide of CoB and CoM (CoM-S-S-CoB). This is the final step in methanogenesis. This chain is Methyl-coenzyme M reductase I subunit gamma (mcrG), found in Methanocaldococcus jannaschii (strain ATCC 43067 / DSM 2661 / JAL-1 / JCM 10045 / NBRC 100440) (Methanococcus jannaschii).